The chain runs to 130 residues: Small ribosomal subunit protein uS8 (130 aa).

Belongs to the universal ribosomal protein uS8 family. In terms of assembly, part of the 30S ribosomal subunit. Contacts proteins S5 and S12.

Functionally, one of the primary rRNA binding proteins, it binds directly to 16S rRNA central domain where it helps coordinate assembly of the platform of the 30S subunit. In Tolumonas auensis (strain DSM 9187 / NBRC 110442 / TA 4), this protein is Small ribosomal subunit protein uS8.